Consider the following 331-residue polypeptide: Vacuolar protein sorting-associated protein 26B (331 aa).

Positions 310–331 (AAQRYEGSNPEPTSAQAKEETD) are disordered.

It belongs to the VPS26 family. As to quaternary structure, component of the heterotrimeric retromer cargo-selective complex (CSC) which is believed to associate with variable sorting nexins to form functionally distinct retromer complex variants.

The protein resides in the cytoplasm. It localises to the membrane. It is found in the endosome. Acts as a component of the retromer cargo-selective complex (CSC). The CSC is believed to be the core functional component of retromer or respective retromer complex variants acting to prevent missorting of selected transmembrane cargo proteins into the lysosomal degradation pathway. Retromer mediates retrograde transport of cargo proteins from endosomes to the trans-Golgi network (TGN). The protein is Vacuolar protein sorting-associated protein 26B (vps26b) of Danio rerio (Zebrafish).